The primary structure comprises 400 residues: S-adenosylmethionine synthase (400 aa).

136 to 141 (GTGSTD) lines the ATP pocket.

The protein belongs to the AdoMet synthase 2 family. It depends on Mg(2+) as a cofactor.

The enzyme catalyses L-methionine + ATP + H2O = S-adenosyl-L-methionine + phosphate + diphosphate. Its pathway is amino-acid biosynthesis; S-adenosyl-L-methionine biosynthesis; S-adenosyl-L-methionine from L-methionine: step 1/1. Functionally, catalyzes the formation of S-adenosylmethionine from methionine and ATP. The sequence is that of S-adenosylmethionine synthase from Methanospirillum hungatei JF-1 (strain ATCC 27890 / DSM 864 / NBRC 100397 / JF-1).